We begin with the raw amino-acid sequence, 192 residues long: UPF0149 protein YPO0911/y3298/YP_3608 (192 aa).

Belongs to the UPF0149 family.

The polypeptide is UPF0149 protein YPO0911/y3298/YP_3608 (Yersinia pestis).